The following is a 195-amino-acid chain: Imidazoleglycerol-phosphate dehydratase (195 aa).

The protein belongs to the imidazoleglycerol-phosphate dehydratase family.

The protein localises to the cytoplasm. It carries out the reaction D-erythro-1-(imidazol-4-yl)glycerol 3-phosphate = 3-(imidazol-4-yl)-2-oxopropyl phosphate + H2O. The protein operates within amino-acid biosynthesis; L-histidine biosynthesis; L-histidine from 5-phospho-alpha-D-ribose 1-diphosphate: step 6/9. This chain is Imidazoleglycerol-phosphate dehydratase, found in Ruegeria sp. (strain TM1040) (Silicibacter sp.).